The sequence spans 422 residues: Serpin A11 (422 aa).

The signal sequence occupies residues 1 to 24 (MGPVWLWLLIAELLLPVHYQPSSA). Residues 25–45 (HGDKSLGAPQPASHQSLEPAP) are disordered. N-linked (GlcNAc...) asparagine glycans are attached at residues asparagine 106, asparagine 169, asparagine 350, and asparagine 385.

Belongs to the serpin family.

The protein localises to the secreted. The polypeptide is Serpin A11 (Serpina11) (Rattus norvegicus (Rat)).